Here is a 232-residue protein sequence, read N- to C-terminus: Large ribosomal subunit protein uL3 (232 aa).

It belongs to the universal ribosomal protein uL3 family. In terms of assembly, part of the 50S ribosomal subunit. Forms a cluster with proteins L14 and L19.

One of the primary rRNA binding proteins, it binds directly near the 3'-end of the 23S rRNA, where it nucleates assembly of the 50S subunit. In Sorangium cellulosum (strain So ce56) (Polyangium cellulosum (strain So ce56)), this protein is Large ribosomal subunit protein uL3.